We begin with the raw amino-acid sequence, 283 residues long: Bifunctional protein FolD (283 aa).

NADP(+) contacts are provided by residues 166–168 and Ser191; that span reads GRS.

The protein belongs to the tetrahydrofolate dehydrogenase/cyclohydrolase family. As to quaternary structure, homodimer.

It catalyses the reaction (6R)-5,10-methylene-5,6,7,8-tetrahydrofolate + NADP(+) = (6R)-5,10-methenyltetrahydrofolate + NADPH. The enzyme catalyses (6R)-5,10-methenyltetrahydrofolate + H2O = (6R)-10-formyltetrahydrofolate + H(+). Its pathway is one-carbon metabolism; tetrahydrofolate interconversion. Functionally, catalyzes the oxidation of 5,10-methylenetetrahydrofolate to 5,10-methenyltetrahydrofolate and then the hydrolysis of 5,10-methenyltetrahydrofolate to 10-formyltetrahydrofolate. In Pediococcus pentosaceus (strain ATCC 25745 / CCUG 21536 / LMG 10740 / 183-1w), this protein is Bifunctional protein FolD.